The primary structure comprises 151 residues: uncharacterized protein (151 aa).

The tract at residues 48–151 (RPPGWQPPVN…SKFDHTRKKF (104 aa)) is disordered. The span at 55–77 (PVNTGPTSPVSINASNAAPSNLK) shows a compositional bias: polar residues. 2 stretches are compositionally biased toward low complexity: residues 85–105 (PRRLSSSTSSASSPPLRRLPS) and 123–141 (KSPSTTKPLSSTPSGSLLR).

This is an uncharacterized protein from Schizosaccharomyces pombe (strain 972 / ATCC 24843) (Fission yeast).